The following is a 125-amino-acid chain: Cyclin-dependent protein kinase inhibitor SMR16 (125 aa).

Probable cyclin-dependent protein kinase (CDK) inhibitor that functions as a repressor of mitosis in the endoreduplication cell cycle. The sequence is that of Cyclin-dependent protein kinase inhibitor SMR16 from Arabidopsis thaliana (Mouse-ear cress).